The sequence spans 271 residues: Tryptophan synthase alpha chain (271 aa).

Catalysis depends on proton acceptor residues Glu49 and Asp60.

Belongs to the TrpA family. In terms of assembly, tetramer of two alpha and two beta chains.

It catalyses the reaction (1S,2R)-1-C-(indol-3-yl)glycerol 3-phosphate + L-serine = D-glyceraldehyde 3-phosphate + L-tryptophan + H2O. It functions in the pathway amino-acid biosynthesis; L-tryptophan biosynthesis; L-tryptophan from chorismate: step 5/5. Its function is as follows. The alpha subunit is responsible for the aldol cleavage of indoleglycerol phosphate to indole and glyceraldehyde 3-phosphate. The polypeptide is Tryptophan synthase alpha chain (Burkholderia pseudomallei (strain 1106a)).